Reading from the N-terminus, the 580-residue chain is F-box only protein 24 (580 aa).

The F-box domain occupies 36-82; that stretch reads PISIQLFPPELVEHIISFLPVRDLVALGQTCRYFHEVCDGEGVWRRI. The stretch at 376-425 is one RCC1 repeat; the sequence is GRIFMQGNNRYGQLGTGDKMDRGEPTQVCYLQRPITLWCGLNHSLVLSQS.

Directly interacts with SKP1 and CUL1.

Functionally, substrate-recognition component of the SCF (SKP1-CUL1-F-box protein)-type E3 ubiquitin ligase complex. The polypeptide is F-box only protein 24 (FBXO24) (Homo sapiens (Human)).